Reading from the N-terminus, the 577-residue chain is Arginine--tRNA ligase (577 aa).

Residues 123–133 (PNLAKEMHVGH) carry the 'HIGH' region motif.

It belongs to the class-I aminoacyl-tRNA synthetase family. As to quaternary structure, monomer.

Its subcellular location is the cytoplasm. The enzyme catalyses tRNA(Arg) + L-arginine + ATP = L-arginyl-tRNA(Arg) + AMP + diphosphate. This Marinomonas sp. (strain MWYL1) protein is Arginine--tRNA ligase.